Consider the following 291-residue polypeptide: Nucleotide-binding protein LGAS_1315 (291 aa).

ATP is bound at residue 13–20 (GMSGAGKT). Residue 63 to 66 (DLRV) participates in GTP binding.

Belongs to the RapZ-like family.

Functionally, displays ATPase and GTPase activities. This Lactobacillus gasseri (strain ATCC 33323 / DSM 20243 / BCRC 14619 / CIP 102991 / JCM 1131 / KCTC 3163 / NCIMB 11718 / NCTC 13722 / AM63) protein is Nucleotide-binding protein LGAS_1315.